The following is a 111-amino-acid chain: uncharacterized protein (111 aa).

This is an uncharacterized protein from Microplitis demolitor bracovirus (isolate Webb) (MdBV).